Reading from the N-terminus, the 236-residue chain is Putative lipoprotein MlpA (236 aa).

Positions Met1–Gly21 are cleaved as a signal peptide. Cys22 is lipidated: N-palmitoyl cysteine. Cys22 is lipidated: S-diacylglycerol cysteine.

It localises to the cell membrane. The protein is Putative lipoprotein MlpA (mlpA) of Myxococcus xanthus.